Reading from the N-terminus, the 86-residue chain is Large ribosomal subunit protein bL31B (86 aa).

It belongs to the bacterial ribosomal protein bL31 family. Type B subfamily. As to quaternary structure, part of the 50S ribosomal subunit.

This chain is Large ribosomal subunit protein bL31B, found in Cupriavidus metallidurans (strain ATCC 43123 / DSM 2839 / NBRC 102507 / CH34) (Ralstonia metallidurans).